Consider the following 85-residue polypeptide: CRISPR-associated endoribonuclease Cas2 2 (85 aa).

Aspartate 8 lines the Mg(2+) pocket.

The protein belongs to the CRISPR-associated endoribonuclease Cas2 protein family. As to quaternary structure, homodimer, forms a heterotetramer with a Cas1 homodimer. Requires Mg(2+) as cofactor.

Functionally, CRISPR (clustered regularly interspaced short palindromic repeat), is an adaptive immune system that provides protection against mobile genetic elements (viruses, transposable elements and conjugative plasmids). CRISPR clusters contain sequences complementary to antecedent mobile elements and target invading nucleic acids. CRISPR clusters are transcribed and processed into CRISPR RNA (crRNA). Functions as a ssRNA-specific endoribonuclease. Involved in the integration of spacer DNA into the CRISPR cassette. This is CRISPR-associated endoribonuclease Cas2 2 from Chloroflexus aurantiacus (strain ATCC 29366 / DSM 635 / J-10-fl).